Consider the following 514-residue polypeptide: Embryonic protein UVS.2 (514 aa).

The signal sequence occupies residues 1 to 19 (MDVKISAILLACIIQYAVS). The region spanning 90–286 (SAINDARFLW…SKINKLYECN (197 aa)) is the Peptidase M12A domain. The N-linked (GlcNAc...) asparagine glycan is linked to Asn-112. 6 disulfides stabilise this stretch: Cys-137/Cys-285, Cys-158/Cys-178, Cys-288/Cys-314, Cys-340/Cys-363, Cys-402/Cys-428, and Cys-455/Cys-475. His-186 is a Zn(2+) binding site. Residue Glu-187 is part of the active site. Zn(2+)-binding residues include His-190 and His-196. An N-linked (GlcNAc...) asparagine glycan is attached at Asn-199. 2 CUB domains span residues 288–400 (CSNL…YGSI) and 402–513 (CGGA…YTFV). 3 N-linked (GlcNAc...) asparagine glycosylation sites follow: Asn-421, Asn-427, and Asn-464.

It depends on Zn(2+) as a cofactor.

The sequence is that of Embryonic protein UVS.2 from Xenopus laevis (African clawed frog).